The chain runs to 201 residues: Small ribosomal subunit protein uS4 (201 aa).

The tract at residues 26 to 48 is disordered; it reads LSKKNYPPGQHGNSRKRKTSEYG. Residues 92–155 enclose the S4 RNA-binding domain; it reads GRLDNVVFRL…KSLEVIANSL (64 aa).

Belongs to the universal ribosomal protein uS4 family. As to quaternary structure, part of the 30S ribosomal subunit. Contacts protein S5. The interaction surface between S4 and S5 is involved in control of translational fidelity.

In terms of biological role, one of the primary rRNA binding proteins, it binds directly to 16S rRNA where it nucleates assembly of the body of the 30S subunit. Its function is as follows. With S5 and S12 plays an important role in translational accuracy. This Bacteroides thetaiotaomicron (strain ATCC 29148 / DSM 2079 / JCM 5827 / CCUG 10774 / NCTC 10582 / VPI-5482 / E50) protein is Small ribosomal subunit protein uS4.